The following is a 459-amino-acid chain: Transcriptional coactivator YAP1-A (459 aa).

The span at 1–13 (MEPGSQQQPSAPA) shows a compositional bias: low complexity. The interval 1 to 22 (MEPGSQQQPSAPAQQPPPVGHQ) is disordered. A phosphoserine; by LATS1 and LATS2 mark is found at S30, S80, S98, and S134. Disordered stretches follow at residues 65-99 (FKQP…AHSS) and 126-145 (SAPH…PLPP). WW domains lie at 141–174 (VPLP…DPRK) and 199–232 (GPLP…DPRL). The interval 246 to 268 (NAPVKAPPALPPPSPQTGVLGSG) is disordered. Residues 250–260 (KAPPALPPPSP) show a composition bias toward pro residues. Positions 261 to 459 (QTGVLGSGGN…LDKESFLTWL (199 aa)) are transactivation domain. A coiled-coil region spans residues 269 to 297 (GNQQMRLQQLQMEKERLRLKHQELLRQVR). The disordered stretch occupies residues 344 to 363 (GTYHSRDESTESGLSMSSYS). The span at 354–363 (ESGLSMSSYS) shows a compositional bias: polar residues.

The protein belongs to the YAP1 family. Interacts with tead1. Phosphorylated by lats1 and lats2; leading to cytoplasmic translocation and inactivation.

The protein localises to the cytoplasm. The protein resides in the nucleus. Its subcellular location is the cell junction. It localises to the tight junction. It is found in the cell membrane. Functionally, transcriptional regulator which can act both as a coactivator and a corepressor and is the critical downstream regulatory target in the Hippo signaling pathway that plays a pivotal role in organ size control and tumor suppression by restricting proliferation and promoting apoptosis. Plays a key role in tissue tension and 3D tissue shape by regulating cortical actomyosin network formation. Required for expansion of the neural plate and neural plate border zone progenitor pools. Acts as a direct regulator of pax3 expression via interaction with tead1. The sequence is that of Transcriptional coactivator YAP1-A from Xenopus laevis (African clawed frog).